We begin with the raw amino-acid sequence, 558 residues long: T-complex protein 1 subunit eta (558 aa).

The disordered stretch occupies residues 524-558; that stretch reads VRNPKSEQPKAPPGGLRRGGPQGMAGLAKNARLGK.

This sequence belongs to the TCP-1 chaperonin family. Heterooligomeric complex of about 850 to 900 kDa that forms two stacked rings, 12 to 16 nm in diameter.

It is found in the cytoplasm. Molecular chaperone; assists the folding of proteins upon ATP hydrolysis. Known to play a role, in vitro, in the folding of actin and tubulin. The protein is T-complex protein 1 subunit eta of Tetrahymena pyriformis.